We begin with the raw amino-acid sequence, 230 residues long: Leucyl/phenylalanyl-tRNA--protein transferase (230 aa).

It belongs to the L/F-transferase family.

The protein resides in the cytoplasm. It catalyses the reaction N-terminal L-lysyl-[protein] + L-leucyl-tRNA(Leu) = N-terminal L-leucyl-L-lysyl-[protein] + tRNA(Leu) + H(+). It carries out the reaction N-terminal L-arginyl-[protein] + L-leucyl-tRNA(Leu) = N-terminal L-leucyl-L-arginyl-[protein] + tRNA(Leu) + H(+). The enzyme catalyses L-phenylalanyl-tRNA(Phe) + an N-terminal L-alpha-aminoacyl-[protein] = an N-terminal L-phenylalanyl-L-alpha-aminoacyl-[protein] + tRNA(Phe). Functions in the N-end rule pathway of protein degradation where it conjugates Leu, Phe and, less efficiently, Met from aminoacyl-tRNAs to the N-termini of proteins containing an N-terminal arginine or lysine. In Syntrophotalea carbinolica (strain DSM 2380 / NBRC 103641 / GraBd1) (Pelobacter carbinolicus), this protein is Leucyl/phenylalanyl-tRNA--protein transferase.